The following is a 517-amino-acid chain: Xaa-Pro dipeptidase (517 aa).

Residues D244, D255, H336, E381, and E420 each coordinate Mn(2+).

It belongs to the peptidase M24B family. Bacterial-type prolidase subfamily. Monomer. Mn(2+) is required as a cofactor.

It catalyses the reaction Xaa-L-Pro dipeptide + H2O = an L-alpha-amino acid + L-proline. The enzyme catalyses diisopropyl fluorophosphate + H2O = diisopropyl phosphate + fluoride + 2 H(+). It carries out the reaction An aryl dialkyl phosphate + H2O = dialkyl phosphate + an aryl alcohol.. Splits dipeptides with a prolyl or hydroxyprolyl residue in the C-terminal position and a nonpolar amino acid at the N-terminal position. Also catalyzes the hydrolysis of toxic organophosphorus cholinesterase-inhibiting compounds including insecticide paraoxon and nerve gases such as diisopropylfluorophosphate (DFP), O-isopropyl methylphosphonofluoridate (sarin), O-pinacolyl methylphosphonofluoridate (soman), and O-cyclohexyl methylphosphonofluoridate. This chain is Xaa-Pro dipeptidase (pepQ), found in Alteromonas sp.